Reading from the N-terminus, the 1451-residue chain is ABC transporter G family member 32 (1451 aa).

The ABC transporter 1 domain maps to 162-435 (GNALHISPTR…FELMGFRCPQ (274 aa)). 195–202 (GPPGSGKT) lines the ATP pocket. An ABC transmembrane type-2 1 domain is found at 513–725 (ALLKANIDRE…AQNAISTNEF (213 aa)). A run of 6 helical transmembrane segments spans residues 531 to 551 (FVYIFKAANLTLTAFLVMTTF), 563 to 583 (GTIYMGALYFALDTIMFNGFA), 618 to 638 (IPVTFFEVGVYVFTTYYVVGF), 650 to 670 (LLLVALNQMSSSLFRFIAGIG), 674 to 694 (VVSQTFGPLSLLAFTALGGFI), and 760 to 780 (IGFGALIGYTLLFNLLYTVAL). The disordered stretch occupies residues 809–835 (ILDSCEEKKSRKKEQSQSVNQKHWNNT). Positions 813–823 (CEEKKSRKKEQ) are enriched in basic and acidic residues. In terms of domain architecture, ABC transporter 2 spans 853–1105 (LSFNDIKYSV…KLIEYFEGIE (253 aa)). 898–905 (GVSGAGKT) is an ATP binding site. The region spanning 1178-1392 (TQCIACLWKH…TLYGLVASQF (215 aa)) is the ABC transmembrane type-2 2 domain. Transmembrane regions (helical) follow at residues 1197 to 1217 (YTAVRLLFTIIIALLFGTMFW), 1237 to 1257 (YAAVLYIGIQNSGCVQPVVVV), 1285 to 1305 (LPYILVQTLVYGVLVYSMIGF), 1312 to 1332 (FIWYLFFMYFTLLYFTFFGMM), 1342 to 1362 (IAAIISPAIYNAWNLFSGYLI), 1373 to 1393 (WYCWICPVAWTLYGLVASQFG), and 1423 to 1443 (LVAVVHVVFTVMFAFLFSFAI).

It belongs to the ABC transporter superfamily. ABCG family. PDR (TC 3.A.1.205) subfamily.

The protein localises to the membrane. May be a general defense protein. The protein is ABC transporter G family member 32 of Oryza sativa subsp. japonica (Rice).